The chain runs to 513 residues: Histidine ammonia-lyase (513 aa).

Residues 144–146 constitute a cross-link (5-imidazolinone (Ala-Gly)); the sequence is ASG. Residue Ser145 is modified to 2,3-didehydroalanine (Ser).

The protein belongs to the PAL/histidase family. Post-translationally, contains an active site 4-methylidene-imidazol-5-one (MIO), which is formed autocatalytically by cyclization and dehydration of residues Ala-Ser-Gly.

The protein resides in the cytoplasm. The catalysed reaction is L-histidine = trans-urocanate + NH4(+). It participates in amino-acid degradation; L-histidine degradation into L-glutamate; N-formimidoyl-L-glutamate from L-histidine: step 1/3. In Streptococcus sanguinis (strain SK36), this protein is Histidine ammonia-lyase.